A 666-amino-acid polypeptide reads, in one-letter code: Pantothenate kinase 1 (666 aa).

This sequence belongs to the type II pantothenate kinase family.

The catalysed reaction is (R)-pantothenate + ATP = (R)-4'-phosphopantothenate + ADP + H(+). It participates in cofactor biosynthesis; coenzyme A biosynthesis; CoA from (R)-pantothenate: step 1/5. Regulated by feedback inhibition by malonyl-CoA. In terms of biological role, catalyzes the phosphorylation of pantothenate the first step in CoA biosynthesis. May play a role in the physiological regulation of the intracellular CoA concentration. This is Pantothenate kinase 1 from Oryza sativa subsp. japonica (Rice).